Consider the following 231-residue polypeptide: Cutinase 2 (231 aa).

Residues 1-16 form the signal peptide; sequence MKFFALTTLLAATASA. Residues cysteine 48 and cysteine 126 are joined by a disulfide bond. Serine 137 (nucleophile) is an active-site residue. Cysteine 188 and cysteine 195 form a disulfide bridge. Residue aspartate 192 is part of the active site. The active-site Proton donor/acceptor is the histidine 205.

The protein belongs to the cutinase family. The 2 disulfide bonds play a critical role in holding the catalytic residues in juxta-position; reduction of the disulfide bridges results in the complete inactivation of the enzyme.

The protein localises to the secreted. It carries out the reaction cutin + H2O = cutin monomers.. Its function is as follows. Catalyzes the hydrolysis of complex carboxylic polyesters found in the cell wall of plants. Degrades cutin, a macromolecule that forms the structure of the plant cuticle. Allows pathogenic fungi to penetrate through the cuticular barrier into the host plant during the initial stage of fungal infection. In Fusarium vanettenii (Neocosmospora pisi), this protein is Cutinase 2 (CUT2).